The chain runs to 252 residues: Type III pantothenate kinase (252 aa).

6–13 (DIGNTTTE) contributes to the ATP binding site. Substrate is bound by residues tyrosine 100 and 107–110 (GADR). Aspartate 109 (proton acceptor) is an active-site residue. Residue aspartate 129 participates in K(+) binding. Threonine 132 provides a ligand contact to ATP. Threonine 184 lines the substrate pocket.

This sequence belongs to the type III pantothenate kinase family. Homodimer. NH4(+) serves as cofactor. It depends on K(+) as a cofactor.

It localises to the cytoplasm. It catalyses the reaction (R)-pantothenate + ATP = (R)-4'-phosphopantothenate + ADP + H(+). The protein operates within cofactor biosynthesis; coenzyme A biosynthesis; CoA from (R)-pantothenate: step 1/5. Catalyzes the phosphorylation of pantothenate (Pan), the first step in CoA biosynthesis. The chain is Type III pantothenate kinase from Sulfurihydrogenibium sp. (strain YO3AOP1).